The following is a 246-amino-acid chain: Probable transcriptional regulatory protein ASA_2843 (246 aa).

It belongs to the TACO1 family.

The protein localises to the cytoplasm. This chain is Probable transcriptional regulatory protein ASA_2843, found in Aeromonas salmonicida (strain A449).